Consider the following 488-residue polypeptide: Elongation factor Tu, chloroplastic (488 aa).

A disordered region spans residues 1–20; that stretch reads MALSSTAATTSSKLKLSNPP. The transit peptide at 1–79 directs the protein to the chloroplast; sequence MALSSTAATT…RPSSSPFTVR (79 aa). In terms of domain architecture, tr-type G spans 89 to 293; the sequence is KPHLNIGTIG…EVDKYIPIPQ (205 aa). The interval 98-105 is G1; it reads GHVDHGKT. 98–105 contacts GTP; the sequence is GHVDHGKT. The interval 139–143 is G2; that stretch reads GITIN. A G3 region spans residues 160-163; that stretch reads DCPG. GTP contacts are provided by residues 160–164 and 215–218; these read DCPGH and NKQD. The tract at residues 215–218 is G4; it reads NKQD. The segment at 253–255 is G5; the sequence is SAL.

Belongs to the TRAFAC class translation factor GTPase superfamily. Classic translation factor GTPase family. EF-Tu/EF-1A subfamily. Higher expression in leaves than in roots.

It is found in the plastid. The protein resides in the chloroplast. This protein promotes the GTP-dependent binding of aminoacyl-tRNA to the A-site of ribosomes during protein biosynthesis. The protein is Elongation factor Tu, chloroplastic (tufA) of Pisum sativum (Garden pea).